The chain runs to 453 residues: Choline kinase alpha (453 aa).

The disordered stretch occupies residues C22–P81. The span at A55–P73 shows a compositional bias: pro residues. S71 carries the post-translational modification Phosphoserine. Residues R113–M119, R142, and Q203–R209 contribute to the ATP site. G115–S117 is a binding site for phosphocholine. K243 is modified (N6-acetyllysine). A Phosphoserine modification is found at S275. ATP-binding residues include Q304 and D326.

This sequence belongs to the choline/ethanolamine kinase family. In terms of assembly, heterodimer with CHKB. Homodimer. Monomer; acetylation by KAT5 promotes dissociation of the homodimer and monomerization. In terms of processing, phosphorylated at Ser-275 by AMPK in response to glucose deprivation, leading to localization to lipid droplets. Post-translationally, acetylated by KAT5 at Lys-243 following phosphorylation by AMPK, leading to monomerization and conversion into a tyrosine-protein kinase. Testis, brain, lung, kidney and liver.

The protein localises to the cytoplasm. It localises to the cytosol. Its subcellular location is the lipid droplet. The catalysed reaction is choline + ATP = phosphocholine + ADP + H(+). It catalyses the reaction ethanolamine + ATP = phosphoethanolamine + ADP + H(+). The enzyme catalyses L-tyrosyl-[protein] + ATP = O-phospho-L-tyrosyl-[protein] + ADP + H(+). Its pathway is phospholipid metabolism; phosphatidylcholine biosynthesis; phosphocholine from choline: step 1/1. It participates in phospholipid metabolism; phosphatidylethanolamine biosynthesis; phosphatidylethanolamine from ethanolamine: step 1/3. Plays a key role in phospholipid biosynthesis by catalyzing the phosphorylation of free choline to phosphocholine, the first step in phosphatidylcholine biosynthesis. Also phosphorylates ethanolamine, thereby contributing to phosphatidylethanolamine biosynthesis. Has higher activity with choline. Functionally, this isoform plays a key role in lipolysis of lipid droplets following glucose deprivation. In response to glucose deprivation, phosphorylated by AMPK, promoting localization to lipid droplets. Phosphorylation is followed by acetylation by KAT5, leading to dissociation of the homodimer into a monomer. Monomeric CHKA isoform 1 is converted into a tyrosine-protein kinase, which phosphorylates lipid droplet structural proteins PLIN2 and PLIN3, leading to lipolysis of lipid droplets. The sequence is that of Choline kinase alpha (Chka) from Rattus norvegicus (Rat).